The following is a 312-amino-acid chain: Olfactory receptor 5p57 (312 aa).

At 1-25 (MEPGNYTVVTEFILLGLTDDITVSV) the chain is on the extracellular side. N5 carries an N-linked (GlcNAc...) asparagine glycan. A helical transmembrane segment spans residues 26–46 (ILFVMFLIVYSVTLMGNLNII). Residues 47 to 54 (VLIRTSPQ) are Cytoplasmic-facing. The chain crosses the membrane as a helical span at residues 55–75 (LHTPMYLFLSHLAFLDIGYSS). Topologically, residues 76 to 99 (SVTPIMLRGFLRKGTFIPVAGCVA) are extracellular. C97 and C189 are joined by a disulfide. A helical transmembrane segment spans residues 100–120 (QLCIVVAFGTSESFLLASMAY). Residues 121–133 (DRYVAICSPLLYS) are Cytoplasmic-facing. Residues 134–154 (TQMSSTVCILLVGTSYLGGWV) traverse the membrane as a helical segment. Residues 155–196 (NAWIFTGCSLNLSFCGPNKINHFFCDYSPLLKLSCSHDFSFE) are Extracellular-facing. A glycan (N-linked (GlcNAc...) asparagine) is linked at N165. The helical transmembrane segment at 197–217 (VIPAISSGSIIVVTVFIIALS) threads the bilayer. At 218 to 237 (YVYILVSILKMRSTEGRQKA) the chain is on the cytoplasmic side. Residues 238–258 (FSTCTSHLTAVTLFFGTITFI) traverse the membrane as a helical segment. Topologically, residues 259–271 (YVMPQSSYSTDQN) are extracellular. A helical membrane pass occupies residues 272-292 (KVVSVFYTVVIPMLNPLIYSF). Topologically, residues 293-312 (RNKEVKEAMKKLIAKTHWWS) are cytoplasmic.

Belongs to the G-protein coupled receptor 1 family.

The protein resides in the cell membrane. In terms of biological role, probable odorant receptor, which recognizes only aliphatic alcohols, suggesting that it may convey a 'woody' or 'sweet' sour. This chain is Olfactory receptor 5p57, found in Mus musculus (Mouse).